Here is a 454-residue protein sequence, read N- to C-terminus: Cobyrinate a,c-diamide synthase (454 aa).

The region spanning 244–440 (RLGIAKDKAF…LHVHFYQNPK (197 aa)) is the GATase cobBQ-type domain. Cys326 serves as the catalytic Nucleophile.

The protein belongs to the CobB/CbiA family. Requires Mg(2+) as cofactor.

It carries out the reaction cob(II)yrinate + 2 L-glutamine + 2 ATP + 2 H2O = cob(II)yrinate a,c diamide + 2 L-glutamate + 2 ADP + 2 phosphate + 2 H(+). Its pathway is cofactor biosynthesis; adenosylcobalamin biosynthesis; cob(II)yrinate a,c-diamide from sirohydrochlorin (anaerobic route): step 10/10. Functionally, catalyzes the ATP-dependent amidation of the two carboxylate groups at positions a and c of cobyrinate, using either L-glutamine or ammonia as the nitrogen source. In Limosilactobacillus reuteri subsp. reuteri (strain JCM 1112) (Lactobacillus reuteri), this protein is Cobyrinate a,c-diamide synthase.